We begin with the raw amino-acid sequence, 283 residues long: Elongation factor Ts (283 aa).

The segment at threonine 80 to valine 83 is involved in Mg(2+) ion dislocation from EF-Tu.

This sequence belongs to the EF-Ts family.

The protein localises to the cytoplasm. In terms of biological role, associates with the EF-Tu.GDP complex and induces the exchange of GDP to GTP. It remains bound to the aminoacyl-tRNA.EF-Tu.GTP complex up to the GTP hydrolysis stage on the ribosome. The chain is Elongation factor Ts from Actinobacillus pleuropneumoniae serotype 5b (strain L20).